We begin with the raw amino-acid sequence, 212 residues long: Redox-sensing transcriptional repressor Rex (212 aa).

The H-T-H motif DNA-binding region spans 17–56 (KYHRYLQELMENDVDRISSKELSEKIGFTASQIRQDLNCF). Residue 91–96 (GAGNIG) coordinates NAD(+).

This sequence belongs to the transcriptional regulatory Rex family. In terms of assembly, homodimer.

The protein resides in the cytoplasm. Modulates transcription in response to changes in cellular NADH/NAD(+) redox state. The protein is Redox-sensing transcriptional repressor Rex of Clostridium perfringens (strain ATCC 13124 / DSM 756 / JCM 1290 / NCIMB 6125 / NCTC 8237 / Type A).